The chain runs to 296 residues: Formamidopyrimidine-DNA glycosylase (296 aa).

P2 acts as the Schiff-base intermediate with DNA in catalysis. E3 acts as the Proton donor in catalysis. The active-site Proton donor; for beta-elimination activity is K61. DNA-binding residues include H104, R123, and K169. Residues 255–289 form an FPG-type zinc finger; sequence DAYGREGEPCRRCGAIMRREKFMNRSSFYCPRCQP. R279 serves as the catalytic Proton donor; for delta-elimination activity.

It belongs to the FPG family. As to quaternary structure, monomer. The cofactor is Zn(2+).

It carries out the reaction Hydrolysis of DNA containing ring-opened 7-methylguanine residues, releasing 2,6-diamino-4-hydroxy-5-(N-methyl)formamidopyrimidine.. It catalyses the reaction 2'-deoxyribonucleotide-(2'-deoxyribose 5'-phosphate)-2'-deoxyribonucleotide-DNA = a 3'-end 2'-deoxyribonucleotide-(2,3-dehydro-2,3-deoxyribose 5'-phosphate)-DNA + a 5'-end 5'-phospho-2'-deoxyribonucleoside-DNA + H(+). Its function is as follows. Involved in base excision repair of DNA damaged by oxidation or by mutagenic agents. Acts as a DNA glycosylase that recognizes and removes damaged bases. Has a preference for oxidized purines, such as 7,8-dihydro-8-oxoguanine (8-oxoG). Has AP (apurinic/apyrimidinic) lyase activity and introduces nicks in the DNA strand. Cleaves the DNA backbone by beta-delta elimination to generate a single-strand break at the site of the removed base with both 3'- and 5'-phosphates. This chain is Formamidopyrimidine-DNA glycosylase, found in Mycobacterium sp. (strain JLS).